The following is a 421-amino-acid chain: 3-isopropylmalate dehydratase large subunit (421 aa).

Residues Cys-301, Cys-361, and Cys-364 each coordinate [4Fe-4S] cluster.

It belongs to the aconitase/IPM isomerase family. LeuC type 2 subfamily. Heterodimer of LeuC and LeuD. [4Fe-4S] cluster serves as cofactor.

The enzyme catalyses (2R,3S)-3-isopropylmalate = (2S)-2-isopropylmalate. Its pathway is amino-acid biosynthesis; L-leucine biosynthesis; L-leucine from 3-methyl-2-oxobutanoate: step 2/4. Functionally, catalyzes the isomerization between 2-isopropylmalate and 3-isopropylmalate, via the formation of 2-isopropylmaleate. This chain is 3-isopropylmalate dehydratase large subunit, found in Desulfitobacterium hafniense (strain Y51).